We begin with the raw amino-acid sequence, 540 residues long: T-complex protein 1 subunit delta (540 aa).

Residues 1 to 12 (MPPAVPAAAATA) are compositionally biased toward low complexity. Positions 1 to 32 (MPPAVPAAAATARQSASGRERNFKDKDKPESV) are disordered. The segment covering 18-31 (GRERNFKDKDKPES) has biased composition (basic and acidic residues).

Belongs to the TCP-1 chaperonin family. In terms of assembly, heterooligomeric complex of about 850 to 900 kDa that forms two stacked rings, 12 to 16 nm in diameter.

It is found in the cytoplasm. Functionally, molecular chaperone; assists the folding of proteins upon ATP hydrolysis. Known to play a role, in vitro, in the folding of actin and tubulin. In Caenorhabditis elegans, this protein is T-complex protein 1 subunit delta (cct-4).